The sequence spans 120 residues: NAD(P)H-quinone oxidoreductase subunit 3 (120 aa).

3 consecutive transmembrane segments (helical) span residues 6–26, 64–84, and 89–109; these read GYDA…LALV, MFAL…PWAV, and LGLL…VALA.

Belongs to the complex I subunit 3 family. NDH-1 can be composed of about 15 different subunits; different subcomplexes with different compositions have been identified which probably have different functions.

The protein resides in the cellular thylakoid membrane. The enzyme catalyses a plastoquinone + NADH + (n+1) H(+)(in) = a plastoquinol + NAD(+) + n H(+)(out). The catalysed reaction is a plastoquinone + NADPH + (n+1) H(+)(in) = a plastoquinol + NADP(+) + n H(+)(out). Its function is as follows. NDH-1 shuttles electrons from an unknown electron donor, via FMN and iron-sulfur (Fe-S) centers, to quinones in the respiratory and/or the photosynthetic chain. The immediate electron acceptor for the enzyme in this species is believed to be plastoquinone. Couples the redox reaction to proton translocation, and thus conserves the redox energy in a proton gradient. Cyanobacterial NDH-1 also plays a role in inorganic carbon-concentration. The chain is NAD(P)H-quinone oxidoreductase subunit 3 from Synechococcus sp. (strain CC9902).